The following is a 247-amino-acid chain: Calpain small subunit 2 (247 aa).

Ala88, Asp91, Glu93, Asp131, Asp133, Thr135, Lys137, Glu142, Asp161, Asp163, Ser165, and Asp204 together coordinate Ca(2+). EF-hand domains follow at residues 118–151, 148–183, 184–212, and 213–247; these read FSLD…NNIK, NNIK…AGFQ, LNEQ…ISCL, and VRLD…TMYS.

In terms of assembly, heterodimer of a large (catalytic) and a small (regulatory) subunit.

The protein localises to the cytoplasm. It localises to the cell membrane. Its function is as follows. Calcium-regulated non-lysosomal thiol-protease which catalyzes limited proteolysis of substrates involved in cytoskeletal remodeling and signal transduction. This small subunit may act as a tissue-specific chaperone of the large subunit, possibly by helping it fold into its correct conformation for activity. This chain is Calpain small subunit 2 (Capns2), found in Mus musculus (Mouse).